Reading from the N-terminus, the 131-residue chain is Translation initiation factor 5A (131 aa).

A Hypusine modification is found at Lys36.

It belongs to the eIF-5A family.

The protein localises to the cytoplasm. In terms of biological role, functions by promoting the formation of the first peptide bond. In Saccharolobus islandicus (strain Y.N.15.51 / Yellowstone #2) (Sulfolobus islandicus), this protein is Translation initiation factor 5A (eIF5A).